Reading from the N-terminus, the 367-residue chain is MSNSQTLVVKLGTSVLTGGSRRLNRAHIVELVRQCAQQHAAGHRIVIVTSGAIAAGREHLGYPELPATIASKQLLAAVGQSRLIQLWEQLFSIYGIHVGQMLLTRADMEDRERFLNARDTLTALLDNRIVPVINENDAVATAEIKVGDNDNLSALAAILAGADKLLLLTDQQGLFTADPRNNPQAELIQDVYGIDDTLRAIAGDSVSGLGTGGMGTKLQAADVAGRAGIETVIAAGSKPGVINDVIEGLPVGTRFHPQQTPLENRKRWIFGAPPAGEITVDEGAQSAILERGSSLLPKGIKSVTGNFSRGEVIRIRNLEGRDIAHGVSRYNSDALRRIAGHHSQQIDAILGYEYGPVAVHRDDMITQ.

Position 10 (lysine 10) interacts with ATP. Substrate-binding residues include serine 50, aspartate 137, and asparagine 149. ATP-binding positions include 169-170 and 211-217; these read TD and TGGMGTK. The region spanning 275-353 is the PUA domain; it reads AGEITVDEGA…QQIDAILGYE (79 aa).

The protein belongs to the glutamate 5-kinase family.

The protein localises to the cytoplasm. It catalyses the reaction L-glutamate + ATP = L-glutamyl 5-phosphate + ADP. It functions in the pathway amino-acid biosynthesis; L-proline biosynthesis; L-glutamate 5-semialdehyde from L-glutamate: step 1/2. Functionally, catalyzes the transfer of a phosphate group to glutamate to form L-glutamate 5-phosphate. The chain is Glutamate 5-kinase from Cronobacter sakazakii (strain ATCC BAA-894) (Enterobacter sakazakii).